The primary structure comprises 405 residues: Cytochrome b (405 aa).

Residues 44–64 form a helical membrane-spanning segment; sequence FGSLAGIAMIIMIATGIFLAM. Residues His-94 and His-108 each coordinate heme b. 8 consecutive transmembrane segments (helical) span residues 97 to 117, 124 to 144, 163 to 183, 191 to 211, 245 to 265, 303 to 323, 338 to 358, and 368 to 388; these read GASM…YYGS, VLWW…FMGY, FSAI…GFSV, FFSL…LHMW, FGLG…PNFF, LGGV…PWLD, GFFW…AMPA, and LATI…GWFE. Residues His-195 and His-209 each contribute to the heme b site.

It belongs to the cytochrome b family. The main subunits of complex b-c1 are: cytochrome b, cytochrome c1 and the Rieske protein. Requires heme b as cofactor.

It localises to the cell membrane. Its function is as follows. Component of the ubiquinol-cytochrome c reductase complex (complex III or cytochrome b-c1 complex), which is a respiratory chain that generates an electrochemical potential coupled to ATP synthesis. The chain is Cytochrome b (petB) from Rhodospirillum rubrum.